The primary structure comprises 170 residues: Ureidoglycolate lyase (170 aa).

It belongs to the ureidoglycolate lyase family. In terms of assembly, homodimer. The cofactor is Ni(2+).

It carries out the reaction (S)-ureidoglycolate = urea + glyoxylate. It functions in the pathway nitrogen metabolism; (S)-allantoin degradation. Its function is as follows. Catalyzes the catabolism of the allantoin degradation intermediate (S)-ureidoglycolate, generating urea and glyoxylate. Involved in the utilization of allantoin as nitrogen source. This chain is Ureidoglycolate lyase, found in Pseudomonas syringae pv. tomato (strain ATCC BAA-871 / DC3000).